Consider the following 363-residue polypeptide: MSAIYNFCAGPAMLPTAVMKKAQQELLDWNGQGVSVMEISHRSKEFIALTKQAEADLRELMHIPANYHVLFMHGGGRGQFSAVVNNFLGNDGRALYLVSGQWSSSALAEAQKLAGDAQIDSLNIVEKHNGLNAVVLPDLHKIDADYRYVHYCPNETVDGIEIFDELDSPWPIVADLSSTIMSREIDVSRYGLIYAGAQKNIGPSGLSIVIVRDDMLKLPSLVQSSIMDYRLAVEHDSMFNTPPTFAWYLAAEVFAWLKSIGGIASIAKINQQKAQMLYQCIDSNTFYRNGVVASNRSQMNVTFQLADETLDGEFLKQAQVAGLVALKGHRIVGGMRASLYNAMPLEGVIALVKFMNEFAAKYR.

Arg42 serves as a coordination point for L-glutamate. Pyridoxal 5'-phosphate-binding positions include 76 to 77 (GR), Trp102, Thr156, Asp175, and Gln198. An N6-(pyridoxal phosphate)lysine modification is found at Lys199. Residue 240–241 (NT) participates in pyridoxal 5'-phosphate binding.

This sequence belongs to the class-V pyridoxal-phosphate-dependent aminotransferase family. SerC subfamily. Homodimer. Requires pyridoxal 5'-phosphate as cofactor.

The protein resides in the cytoplasm. The enzyme catalyses O-phospho-L-serine + 2-oxoglutarate = 3-phosphooxypyruvate + L-glutamate. It catalyses the reaction 4-(phosphooxy)-L-threonine + 2-oxoglutarate = (R)-3-hydroxy-2-oxo-4-phosphooxybutanoate + L-glutamate. The protein operates within amino-acid biosynthesis; L-serine biosynthesis; L-serine from 3-phospho-D-glycerate: step 2/3. It participates in cofactor biosynthesis; pyridoxine 5'-phosphate biosynthesis; pyridoxine 5'-phosphate from D-erythrose 4-phosphate: step 3/5. Functionally, catalyzes the reversible conversion of 3-phosphohydroxypyruvate to phosphoserine and of 3-hydroxy-2-oxo-4-phosphonooxybutanoate to phosphohydroxythreonine. This Shewanella sp. (strain W3-18-1) protein is Phosphoserine aminotransferase.